We begin with the raw amino-acid sequence, 347 residues long: 4-hydroxy-2-oxovalerate aldolase (347 aa).

The Pyruvate carboxyltransferase domain maps to 2-252 (ILISDATLRD…DTRTTFEHVM (251 aa)). 10–11 (RD) provides a ligand contact to substrate. Position 11 (D11) interacts with Mn(2+). The Proton acceptor role is filled by H14. Residues S164 and H191 each coordinate substrate. 2 residues coordinate Mn(2+): H191 and H193.

It belongs to the 4-hydroxy-2-oxovalerate aldolase family.

The enzyme catalyses (S)-4-hydroxy-2-oxopentanoate = acetaldehyde + pyruvate. The sequence is that of 4-hydroxy-2-oxovalerate aldolase (mhpE) from Burkholderia thailandensis (strain ATCC 700388 / DSM 13276 / CCUG 48851 / CIP 106301 / E264).